Reading from the N-terminus, the 260-residue chain is UPF0294 protein YPO1077/y3099/YP_2772 (260 aa).

It belongs to the UPF0294 family.

The protein localises to the cytoplasm. The polypeptide is UPF0294 protein YPO1077/y3099/YP_2772 (Yersinia pestis).